The sequence spans 102 residues: Transcription factor UPBEAT1 (102 aa).

The bHLH domain occupies 32–82; that stretch reads IRPRKSVEASRRPCRAIHRRVKTLKELVPNTKTSEGLDGLFRQTADYILAL.

In terms of assembly, homodimer. As to expression, expressed in the root vascular tissue and in root hairs and lateral root caps. Detected at the protein level in all cell files in the elongation zone.

The protein resides in the nucleus. Its function is as follows. Transcription factor that modulates the balance between cellular proliferation and differentiation in root growth. Does not act through cytokinin and auxin signaling, but by repressing peroxidase expression in the elongation zone. The chain is Transcription factor UPBEAT1 (UPB1) from Arabidopsis thaliana (Mouse-ear cress).